A 480-amino-acid polypeptide reads, in one-letter code: Outer capsid protein VP5 (480 aa).

The involved in membrane permeabilization stretch occupies residues 1 to 48 (MTSKRLGARFPGFLNRIGSGITRAARSDTTKRIPSAAGRAVERVAASE).

Belongs to the orbivirus VP5 family.

It localises to the virion. Its function is as follows. VP5 protein is one of the two proteins (with VP2) which constitute the virus particle outer capsid. Acts as a membrane permeabilization protein that mediates release of viral particles from endosomal compartments into the cytoplasm. Permeabilization activity is probably negatively regulated by VP2 and is triggered by endosomal degradation of VP2 and exposure to low pH. In Ixodes (gulls), this protein is Outer capsid protein VP5 (Segment-6).